The chain runs to 375 residues: S-adenosylmethionine:tRNA ribosyltransferase-isomerase (375 aa).

It belongs to the QueA family. Monomer.

It is found in the cytoplasm. It carries out the reaction 7-aminomethyl-7-carbaguanosine(34) in tRNA + S-adenosyl-L-methionine = epoxyqueuosine(34) in tRNA + adenine + L-methionine + 2 H(+). It participates in tRNA modification; tRNA-queuosine biosynthesis. Transfers and isomerizes the ribose moiety from AdoMet to the 7-aminomethyl group of 7-deazaguanine (preQ1-tRNA) to give epoxyqueuosine (oQ-tRNA). The polypeptide is S-adenosylmethionine:tRNA ribosyltransferase-isomerase (Rickettsia typhi (strain ATCC VR-144 / Wilmington)).